The primary structure comprises 39 residues: Colipase (39 aa).

Disulfide bonds link Cys-16-Cys-27 and Cys-22-Cys-38.

It belongs to the colipase family. Forms a 1:1 stoichiometric complex with pancreatic lipase. In terms of tissue distribution, expressed by the pancreas.

It is found in the secreted. Functionally, colipase is a cofactor of pancreatic lipase. It allows the lipase to anchor itself to the lipid-water interface. Without colipase the enzyme is washed off by bile salts, which have an inhibitory effect on the lipase. The sequence is that of Colipase from Squalus acanthias (Spiny dogfish).